The sequence spans 349 residues: Isopentenyl-diphosphate delta-isomerase (349 aa).

6 to 7 provides a ligand contact to substrate; the sequence is RK. FMN-binding positions include 62–64, Ser93, and Asn122; that span reads AMT. Gln152 lines the substrate pocket. Position 153 (Glu153) interacts with Mg(2+). FMN-binding positions include Lys184, Thr214, 258–259, and 280–281; these read GG and AG.

The protein belongs to the IPP isomerase type 2 family. In terms of assembly, homooctamer. Dimer of tetramers. The cofactor is FMN. NADPH serves as cofactor. Mg(2+) is required as a cofactor.

The protein resides in the cytoplasm. The catalysed reaction is isopentenyl diphosphate = dimethylallyl diphosphate. Involved in the biosynthesis of isoprenoids. Catalyzes the 1,3-allylic rearrangement of the homoallylic substrate isopentenyl (IPP) to its allylic isomer, dimethylallyl diphosphate (DMAPP). The chain is Isopentenyl-diphosphate delta-isomerase from Bacillus cereus (strain AH187).